A 70-amino-acid polypeptide reads, in one-letter code: Putative membrane protein insertion efficiency factor (70 aa).

The protein belongs to the UPF0161 family.

Its subcellular location is the cell inner membrane. Could be involved in insertion of integral membrane proteins into the membrane. The polypeptide is Putative membrane protein insertion efficiency factor (Sphingopyxis alaskensis (strain DSM 13593 / LMG 18877 / RB2256) (Sphingomonas alaskensis)).